The following is a 179-amino-acid chain: UPF0227 protein PM0825 (179 aa).

The protein belongs to the UPF0227 family.

This is UPF0227 protein PM0825 from Pasteurella multocida (strain Pm70).